Reading from the N-terminus, the 521-residue chain is Forkhead box protein N4 (521 aa).

Residues 197–293 (KPIYSYSCLI…EEMHKWKRKD (97 aa)) constitute a DNA-binding region (fork-head). The interval 371 to 406 (PQAHLAPDSPAPAQTPPLHALPSLSPGPLPQPAMGR) is disordered.

As to expression, mainly expressed in proliferator progenitor cells in brain and retina rather than differentiated cells. In contrast, is expressed only in postmitotic epithelial cells rather than in proliferative progenitors in the proximal airway.

It is found in the nucleus. Transcription factor essential for neural and some non-neural tissues development, such as retina and lung respectively. Binds to an 11-bp consensus sequence containing the invariant tetranucleotide 5'-ACGC-3'. During development of the central nervous system, is required to specify the amacrine and horizontal cell fates from multipotent retinal progenitors while suppressing the alternative photoreceptor cell fates through activating DLL4-NOTCH signaling. Also acts synergistically with ASCL1/MASH1 to activate DLL4-NOTCH signaling and drive commitment of p2 progenitors to the V2b interneuron fates during spinal cord neurogenesis. In development of non-neural tissues, plays an essential role in the specification of the atrioventricular canal and is indirectly required for patterning the distal airway during lung development. The sequence is that of Forkhead box protein N4 (Foxn4) from Mus musculus (Mouse).